The primary structure comprises 157 residues: Endoribonuclease YbeY (157 aa).

Zn(2+) contacts are provided by H111, H115, and H121.

The protein belongs to the endoribonuclease YbeY family. Zn(2+) serves as cofactor.

The protein resides in the cytoplasm. Single strand-specific metallo-endoribonuclease involved in late-stage 70S ribosome quality control and in maturation of the 3' terminus of the 16S rRNA. This is Endoribonuclease YbeY from Pseudomonas putida (strain ATCC 47054 / DSM 6125 / CFBP 8728 / NCIMB 11950 / KT2440).